The chain runs to 213 residues: 5''-phosphoribostamycin phosphatase (213 aa).

The Tele-phosphohistidine intermediate role is filled by His8. The active site involves His155.

It belongs to the histidine phosphatase superfamily.

The catalysed reaction is 5''-phosphoribostamycin + H2O = ribostamycin + phosphate. Its pathway is antibiotic biosynthesis; butirosin biosynthesis. Its function is as follows. Catalyzes dephosphorylation of 5''-phosphoribostamycin to generate ribostamycinin the biosynthetic pathway of butirosin. The chain is 5''-phosphoribostamycin phosphatase (btrP) from Niallia circulans (Bacillus circulans).